A 70-amino-acid chain; its full sequence is Large ribosomal subunit protein bL31 (70 aa).

4 residues coordinate Zn(2+): Cys16, Cys18, Cys37, and Cys40.

This sequence belongs to the bacterial ribosomal protein bL31 family. Type A subfamily. Part of the 50S ribosomal subunit. Zn(2+) is required as a cofactor.

In terms of biological role, binds the 23S rRNA. This chain is Large ribosomal subunit protein bL31, found in Shewanella amazonensis (strain ATCC BAA-1098 / SB2B).